We begin with the raw amino-acid sequence, 415 residues long: Arginine biosynthesis bifunctional protein ArgJ (415 aa).

Residues threonine 156, lysine 182, threonine 193, glutamate 279, asparagine 410, and threonine 415 each contribute to the substrate site. The active-site Nucleophile is threonine 193.

This sequence belongs to the ArgJ family. In terms of assembly, heterotetramer of two alpha and two beta chains.

It localises to the cytoplasm. The catalysed reaction is N(2)-acetyl-L-ornithine + L-glutamate = N-acetyl-L-glutamate + L-ornithine. The enzyme catalyses L-glutamate + acetyl-CoA = N-acetyl-L-glutamate + CoA + H(+). It functions in the pathway amino-acid biosynthesis; L-arginine biosynthesis; L-ornithine and N-acetyl-L-glutamate from L-glutamate and N(2)-acetyl-L-ornithine (cyclic): step 1/1. Its pathway is amino-acid biosynthesis; L-arginine biosynthesis; N(2)-acetyl-L-ornithine from L-glutamate: step 1/4. Its function is as follows. Catalyzes two activities which are involved in the cyclic version of arginine biosynthesis: the synthesis of N-acetylglutamate from glutamate and acetyl-CoA as the acetyl donor, and of ornithine by transacetylation between N(2)-acetylornithine and glutamate. The sequence is that of Arginine biosynthesis bifunctional protein ArgJ from Synechococcus sp. (strain ATCC 27144 / PCC 6301 / SAUG 1402/1) (Anacystis nidulans).